A 317-amino-acid polypeptide reads, in one-letter code: Protein IRX15-LIKE (317 aa).

Residues 27-47 form a helical membrane-spanning segment; it reads LWLLAFVSFFTIAFLLTLLYT.

As to expression, expressed in roots, rosette leaves, stems and siliques. Expressed in the xylem.

The protein localises to the golgi apparatus membrane. In terms of biological role, required for xylan biosynthesis, but not directly involved in catalyzing the addition of sugars to the growing polymer. The sequence is that of Protein IRX15-LIKE (IRX15-L) from Arabidopsis thaliana (Mouse-ear cress).